Consider the following 148-residue polypeptide: UPF0756 membrane protein Ent638_1667 (148 aa).

4 helical membrane passes run 14–34 (ALGF…LIIV), 51–71 (LTIG…SGTL), 86–106 (LIAI…VTLM), and 121–141 (VLGV…AGLV).

This sequence belongs to the UPF0756 family.

Its subcellular location is the cell membrane. In Enterobacter sp. (strain 638), this protein is UPF0756 membrane protein Ent638_1667.